The following is a 513-amino-acid chain: Histidine ammonia-lyase (513 aa).

The 5-imidazolinone (Ala-Gly) cross-link spans 144-146 (ASG). At S145 the chain carries 2,3-didehydroalanine (Ser).

The protein belongs to the PAL/histidase family. Post-translationally, contains an active site 4-methylidene-imidazol-5-one (MIO), which is formed autocatalytically by cyclization and dehydration of residues Ala-Ser-Gly.

It is found in the cytoplasm. It carries out the reaction L-histidine = trans-urocanate + NH4(+). The protein operates within amino-acid degradation; L-histidine degradation into L-glutamate; N-formimidoyl-L-glutamate from L-histidine: step 1/3. This is Histidine ammonia-lyase from Streptococcus pyogenes serotype M5 (strain Manfredo).